A 901-amino-acid polypeptide reads, in one-letter code: Protein SOK1 (901 aa).

Disordered regions lie at residues 1 to 87 (MDQP…QNII), 106 to 139 (RSSGVITPSMSLNASTNATNNDSSGNSANSSDLK), and 162 to 231 (NDDN…NASN). Positions 10-51 (PTTASNPAPSSTNSSSAPSATNSKQERSSSSLSKPSSVVPSK) are enriched in low complexity. Phosphoserine occurs at positions 40 and 53. Polar residues-rich tracts occupy residues 74–87 (GDTSTLDGSSQNII) and 106–115 (RSSGVITPSM). Low complexity predominate over residues 116-138 (SLNASTNATNNDSSGNSANSSDL). Phosphoserine occurs at positions 191 and 193. Polar residues predominate over residues 220–231 (AAQQQPPGNASN). A Phosphoserine modification is found at Ser-245.

Belongs to the TCP11 family.

The protein localises to the nucleus. Its function is as follows. High copy suppressor of a cyclic AMP-dependent protein kinase mutant. The polypeptide is Protein SOK1 (SOK1) (Saccharomyces cerevisiae (strain ATCC 204508 / S288c) (Baker's yeast)).